Here is a 426-residue protein sequence, read N- to C-terminus: Serine--tRNA ligase (426 aa).

Residue 229–231 participates in L-serine binding; that stretch reads TAE. ATP is bound at residue 260–262; that stretch reads RSE. Glu-283 serves as a coordination point for L-serine. ATP is bound at residue 347–350; sequence EIAS. Residue Ser-383 coordinates L-serine.

The protein belongs to the class-II aminoacyl-tRNA synthetase family. Type-1 seryl-tRNA synthetase subfamily. In terms of assembly, homodimer. The tRNA molecule binds across the dimer.

The protein resides in the cytoplasm. The enzyme catalyses tRNA(Ser) + L-serine + ATP = L-seryl-tRNA(Ser) + AMP + diphosphate + H(+). The catalysed reaction is tRNA(Sec) + L-serine + ATP = L-seryl-tRNA(Sec) + AMP + diphosphate + H(+). The protein operates within aminoacyl-tRNA biosynthesis; selenocysteinyl-tRNA(Sec) biosynthesis; L-seryl-tRNA(Sec) from L-serine and tRNA(Sec): step 1/1. In terms of biological role, catalyzes the attachment of serine to tRNA(Ser). Is also able to aminoacylate tRNA(Sec) with serine, to form the misacylated tRNA L-seryl-tRNA(Sec), which will be further converted into selenocysteinyl-tRNA(Sec). The protein is Serine--tRNA ligase of Rickettsia bellii (strain RML369-C).